We begin with the raw amino-acid sequence, 1004 residues long: 2-oxoglutarate dehydrogenase E1 component (1004 aa).

Belongs to the alpha-ketoglutarate dehydrogenase family. Homodimer. Part of the 2-oxoglutarate dehydrogenase (OGDH) complex composed of E1 (2-oxoglutarate dehydrogenase), E2 (dihydrolipoamide succinyltransferase) and E3 (dihydrolipoamide dehydrogenase); the complex contains multiple copies of the three enzymatic components (E1, E2 and E3). Thiamine diphosphate is required as a cofactor.

It catalyses the reaction N(6)-[(R)-lipoyl]-L-lysyl-[protein] + 2-oxoglutarate + H(+) = N(6)-[(R)-S(8)-succinyldihydrolipoyl]-L-lysyl-[protein] + CO2. E1 component of the 2-oxoglutarate dehydrogenase (OGDH) complex which catalyzes the decarboxylation of 2-oxoglutarate, the first step in the conversion of 2-oxoglutarate to succinyl-CoA and CO(2). The sequence is that of 2-oxoglutarate dehydrogenase E1 component from Brucella suis biovar 1 (strain 1330).